A 32-amino-acid polypeptide reads, in one-letter code: Photosystem I reaction center subunit XII (32 aa).

A helical membrane pass occupies residues 10–27 (VVALISALVTGILALRLG).

This sequence belongs to the PsaM family.

Its subcellular location is the plastid. The protein resides in the chloroplast thylakoid membrane. This Zygnema circumcarinatum (Green alga) protein is Photosystem I reaction center subunit XII.